The sequence spans 420 residues: MRQVVRFSLLFLPCAILSVVLIGAGVLRWALWGMSFGIDFQSGLIERLRIAPPAFSLVYTGTQSMQFFQDEQKVVFTVSSPGVLGERYEFLYTEYPTLRAFSEGAKKVEHLSVTLHAPETVYMRDTFSGAEGSTLSSASCFVHYFSEDVRAPGVEELRRVLKDVPSAVVQQVGVRAEHTFQVRVAAETAFPSSLLPEQGGTALAQSDAPDLVTPQGAVESVVYAALVRAYGADHVVRLAMDFVGSRFSHLLVRQALLLVLGALVLIFLYVALRFRWFFALGAIVALVHDACIMVSFMVWFGLEFNSASIAAILTIIGYSINDTVVVFDRVRQTILLDPIASVTTVLDRSQTDMLTRTVVTTVTTLLAALMLYVFTEGGSRDFSLALMVGMVSGVYSTIYIAGGCIALISRGKSGGQLLGL.

The next 6 helical transmembrane spans lie at 7–27, 250–270, 276–296, 309–327, 358–378, and 388–408; these read FSLL…AGVL, LLVR…FLYV, WFFA…MVSF, IAAI…VVVF, VVTT…TEGG, and VGMV…IALI.

It belongs to the SecD/SecF family. SecF subfamily. As to quaternary structure, forms a complex with SecD. Part of the essential Sec protein translocation apparatus which comprises SecA, SecYEG and auxiliary proteins SecDF. Other proteins may also be involved.

It is found in the cell inner membrane. Its function is as follows. Part of the Sec protein translocase complex. Interacts with the SecYEG preprotein conducting channel. SecDF uses the proton motive force (PMF) to complete protein translocation after the ATP-dependent function of SecA. In Treponema pallidum (strain Nichols), this protein is Protein translocase subunit SecF.